The chain runs to 240 residues: FAS1 domain-containing protein AN1527 (240 aa).

The N-terminal stretch at 1–24 is a signal peptide; sequence MRQLSTTALVLFLFFYCSISTAWS. The FAS1 domain occupies 91–239; sequence EPTISDVLPK…GEVWVIDGVI (149 aa).

The protein localises to the vacuole. The polypeptide is FAS1 domain-containing protein AN1527 (Emericella nidulans (strain FGSC A4 / ATCC 38163 / CBS 112.46 / NRRL 194 / M139) (Aspergillus nidulans)).